We begin with the raw amino-acid sequence, 69 residues long: uncharacterized protein (69 aa).

Positions 1-21 (MELLIPLSLLGLYLFSGTRDS) are cleaved as a signal peptide. N-linked (GlcNAc...) asparagine glycosylation occurs at asparagine 41.

It localises to the secreted. This is an uncharacterized protein from Dictyostelium discoideum (Social amoeba).